The following is a 342-amino-acid chain: MVIALDAMGGDFGPVVTVPASLQALSLYPKLRLLLVGNPDAILPILATSKSIGLDRLTVIPARSVISGDARPSQAIRVSKDTSMRVALELIKSGRAHACVSAGNTGALMGLSKLVLKSVHGIERPALTTLLPHQKQGKTVILDLGANISCDGAMLVQFAIMGSVLSKQILGVSNPRVALLNIGSEETKGLDNIRHASRILHTISSIHYVGYVEANDLLMGKTDVLVCDGFIGNITLKTMEGVIRVILSTLQSSEKKNKLNWFMQIINSWIRKYLFKQFNQFNPDWYNGAHLVGLRSTVIKSHGAANQHAFIAAITQAMHSVEREVPEKISHQLSTVLSKNNH.

This sequence belongs to the PlsX family. In terms of assembly, homodimer. Probably interacts with PlsY.

The protein localises to the cytoplasm. The enzyme catalyses a fatty acyl-[ACP] + phosphate = an acyl phosphate + holo-[ACP]. It participates in lipid metabolism; phospholipid metabolism. Catalyzes the reversible formation of acyl-phosphate (acyl-PO(4)) from acyl-[acyl-carrier-protein] (acyl-ACP). This enzyme utilizes acyl-ACP as fatty acyl donor, but not acyl-CoA. The sequence is that of Phosphate acyltransferase from Blochmanniella pennsylvanica (strain BPEN).